Reading from the N-terminus, the 297-residue chain is MSGLRQIAFYGKGGIGKSTTSQNTLAALVDLGQKILIVGCDPKADSTRLILNAKAQDTVLHLAAQEGSVEDLELQDVLKIGYKDIKCVESGGPEPGVGCAGRGVITSINFLEENGAYDNVDYVSYDVLGDVVCGGFAMPIRENKAQEIYIVMSGEMMALYAANNIAKGILKYAHSGGVRLGGLICNERQTDRELDLSEALAARLNSKLIHFVPRDNIVQHAELRKMTVIQYAPDSKQAGEYRALAEKIHGNSGQGTIPTPITMEELEDMLLDFGIMKTDEQMLAELQAKEAKLAVAQ.

ATP is bound at residue 11–18; that stretch reads GKGGIGKS. A [4Fe-4S] cluster-binding site is contributed by cysteine 99. Arginine 102 is modified (ADP-ribosylarginine; by dinitrogenase reductase ADP-ribosyltransferase). Cysteine 133 is a binding site for [4Fe-4S] cluster.

This sequence belongs to the NifH/BchL/ChlL family. Homodimer. The cofactor is [4Fe-4S] cluster. In terms of processing, the reversible ADP-ribosylation of Arg-102 inactivates the nitrogenase reductase and regulates nitrogenase activity.

It carries out the reaction N2 + 8 reduced [2Fe-2S]-[ferredoxin] + 16 ATP + 16 H2O = H2 + 8 oxidized [2Fe-2S]-[ferredoxin] + 2 NH4(+) + 16 ADP + 16 phosphate + 6 H(+). Its function is as follows. The key enzymatic reactions in nitrogen fixation are catalyzed by the nitrogenase complex, which has 2 components: the iron protein and the molybdenum-iron protein. This chain is Nitrogenase iron protein, found in Mesorhizobium japonicum (strain LMG 29417 / CECT 9101 / MAFF 303099) (Mesorhizobium loti (strain MAFF 303099)).